We begin with the raw amino-acid sequence, 262 residues long: tRNA pseudouridine synthase A 2 (262 aa).

The active-site Nucleophile is aspartate 66. Tyrosine 125 serves as a coordination point for substrate.

It belongs to the tRNA pseudouridine synthase TruA family. In terms of assembly, homodimer.

The enzyme catalyses uridine(38/39/40) in tRNA = pseudouridine(38/39/40) in tRNA. In terms of biological role, formation of pseudouridine at positions 38, 39 and 40 in the anticodon stem and loop of transfer RNAs. This Protochlamydia amoebophila (strain UWE25) protein is tRNA pseudouridine synthase A 2.